Here is a 181-residue protein sequence, read N- to C-terminus: Large ribosomal subunit protein uL6 (181 aa).

Belongs to the universal ribosomal protein uL6 family. In terms of assembly, part of the 50S ribosomal subunit.

Functionally, this protein binds to the 23S rRNA, and is important in its secondary structure. It is located near the subunit interface in the base of the L7/L12 stalk, and near the tRNA binding site of the peptidyltransferase center. The chain is Large ribosomal subunit protein uL6 from Hydrogenobaculum sp. (strain Y04AAS1).